Here is a 369-residue protein sequence, read N- to C-terminus: sn-glycerol-3-phosphate import ATP-binding protein UgpC (369 aa).

In terms of domain architecture, ABC transporter spans 4-235; the sequence is LSLRNVQKTY…PASTFVAGFI (232 aa). 37–44 serves as a coordination point for ATP; that stretch reads GPSGCGKS.

It belongs to the ABC transporter superfamily. sn-glycerol-3-phosphate importer (TC 3.A.1.1.3) family. As to quaternary structure, the complex is composed of two ATP-binding proteins (UgpC), two transmembrane proteins (UgpA and UgpE) and a solute-binding protein (UgpB).

It localises to the cell inner membrane. The enzyme catalyses sn-glycerol 3-phosphate(out) + ATP + H2O = sn-glycerol 3-phosphate(in) + ADP + phosphate + H(+). Its function is as follows. Part of the ABC transporter complex UgpBAEC involved in sn-glycerol-3-phosphate (G3P) import. Responsible for energy coupling to the transport system. The chain is sn-glycerol-3-phosphate import ATP-binding protein UgpC from Cupriavidus pinatubonensis (strain JMP 134 / LMG 1197) (Cupriavidus necator (strain JMP 134)).